An 873-amino-acid polypeptide reads, in one-letter code: Putative receptor-like protein kinase At5g39000 (873 aa).

The N-terminal stretch at 1 to 21 is a signal peptide; the sequence is MIRHALLIFSILVSTPIVGEG. Residues 22-445 lie on the Extracellular side of the membrane; it reads ATSTYEPTDV…KNKSHILPIT (424 aa). 9 N-linked (GlcNAc...) asparagine glycosylation sites follow: N49, N64, N138, N168, N216, N266, N300, N340, and N437. Residues 446–466 form a helical membrane-spanning segment; it reads LAVVGSLVVLAMFVVGVLVIM. At 467–873 the chain is on the cytoplasmic side; it reads KKKKKSKPST…FSEINEPKAR (407 aa). Residues 472-494 are disordered; it reads SKPSTNSSWCPLPHGTDSTNTKP. The region spanning 518–803 is the Protein kinase domain; sequence FEDKLIIGVG…EFALQLHETA (286 aa). ATP-binding positions include 524 to 532 and K547; that span reads IGVGGFGSV. Catalysis depends on D646, which acts as the Proton acceptor. The tract at residues 813-843 is disordered; sequence LDLMPSGEVGTTTDGEDDLFSRTTGHVGKST. Positions 833–843 are enriched in polar residues; the sequence is SRTTGHVGKST.

It belongs to the protein kinase superfamily. Ser/Thr protein kinase family.

The protein localises to the membrane. This Arabidopsis thaliana (Mouse-ear cress) protein is Putative receptor-like protein kinase At5g39000.